Here is a 120-residue protein sequence, read N- to C-terminus: MSRLTLPKNARLLKRKQFVYVQRNGRCCRADQVTLRVVPSRHSNTRKVGITVSKKFGKAHQRNRFKRIVREAFRHVRPNLPGCQVVISPRGNSQPDFLKLSEELLQRIPEALPLASSSRC.

The protein belongs to the RnpA family. In terms of assembly, consists of a catalytic RNA component (M1 or rnpB) and a protein subunit.

The enzyme catalyses Endonucleolytic cleavage of RNA, removing 5'-extranucleotides from tRNA precursor.. In terms of biological role, RNaseP catalyzes the removal of the 5'-leader sequence from pre-tRNA to produce the mature 5'-terminus. It can also cleave other RNA substrates such as 4.5S RNA. The protein component plays an auxiliary but essential role in vivo by binding to the 5'-leader sequence and broadening the substrate specificity of the ribozyme. The protein is Ribonuclease P protein component of Chlamydia trachomatis serovar D (strain ATCC VR-885 / DSM 19411 / UW-3/Cx).